The following is a 1087-amino-acid chain: Transcription factor AP2-Z (1087 aa).

Residues 586 to 682 constitute a DNA-binding region (AP2); sequence GRVYKVIVRG…IKYNSVPDSL (97 aa).

It belongs to the AP2/ERF transcription factor family. AP2 subfamily.

The protein resides in the nucleus. It localises to the chromosome. In terms of biological role, transcription factor which binds the 5'-[TC][AC]TG[AT]AC[AG]-3' motif. During the mosquito vector stage, plays an essential role in the zygote for de novo transcription of genes required for ookinete formation. The chain is Transcription factor AP2-Z from Plasmodium berghei (strain Anka).